We begin with the raw amino-acid sequence, 718 residues long: Sodium/myo-inositol cotransporter (718 aa).

Over 1–9 (MRAVLDTAD) the chain is Extracellular. A helical membrane pass occupies residues 10 to 29 (IAIVALYFILVMCIGFFAMW). Residues 30 to 38 (KSNRSTVSG) are Cytoplasmic-facing. A helical transmembrane segment spans residues 39–57 (YFLAGRSMTWVAIGASLFV). At 58-86 (SNIGSEHFIGLAGSGAASGFAVGAWEFNA) the chain is on the extracellular side. A helical membrane pass occupies residues 87 to 110 (LLLLQLLGWVFIPIYIRSGVYTMP). The Cytoplasmic segment spans residues 111–123 (EYLSKRFGGHRIQ). A helical transmembrane segment spans residues 124–144 (VYFAALSLILYIFTKLSVDLY). Topologically, residues 145 to 157 (SGALFIQESLGWN) are extracellular. A helical transmembrane segment spans residues 158–183 (LYVSVILLIGMTALLTVTGGLVAVIY). Residues 184-186 (TDT) lie on the Cytoplasmic side of the membrane. Residues 187-205 (LQALLMIIGALTLMIISIM) traverse the membrane as a helical segment. The Extracellular segment spans residues 206 to 303 (EIGGFEEVKR…HAKGSTLMAG (98 aa)). Asn232 carries N-linked (GlcNAc...) asparagine glycosylation. The helical transmembrane segment at 304-324 (FLKLLPMFIIVVPGMISRILF) threads the bilayer. At 325-353 (TDDIACINPEHCMLVCGSRAGCSNIAYPR) the chain is on the cytoplasmic side. The chain crosses the membrane as a helical span at residues 354-376 (LVMKLVPVGLRGLMMAVMIAALM). Residues 377-406 (SDLDSIFNSASTIFTLDVYKLIRKSASSRE) are Extracellular-facing. A helical membrane pass occupies residues 407-430 (LMIVGRIFVAFMVVISIAWVPIIV). The Cytoplasmic portion of the chain corresponds to 431–443 (EMQGGQMYLYIQE). Residues 444 to 462 (VADYLTPPVAALFLLAIFW) traverse the membrane as a helical segment. Residues 463-510 (KRCNEQGAFYGGMAGFVLGAVRLILAFAYRAPECDQPDNRPGFIKDIH) are Extracellular-facing. Residues 511–532 (YMYVATGLFWVTGLITVIVSLL) form a helical membrane-spanning segment. At 533 to 695 (TPPPTKEQIR…QMLEETRQVK (163 aa)) the chain is on the cytoplasmic side. Ser594 and Ser632 each carry phosphoserine. A helical transmembrane segment spans residues 696–716 (VILNIGLFAVCSLGIFMFVYF). Residues 717-718 (SL) lie on the Extracellular side of the membrane.

It belongs to the sodium:solute symporter (SSF) (TC 2.A.21) family. Interacts with KCNQ2 (via the pore module). Interacts with KCNQ1; this interaction is direct. Forms coregulatory complexes with ion channels KCNQ2-KCNQ3 and KCNQ1-KCNE2.

The protein localises to the apical cell membrane. Its subcellular location is the basolateral cell membrane. It catalyses the reaction myo-inositol(out) + 2 Na(+)(out) = myo-inositol(in) + 2 Na(+)(in). The catalysed reaction is scyllo-inositol(out) + 2 Na(+)(out) = scyllo-inositol(in) + 2 Na(+)(in). In terms of biological role, electrogenic Na(+)-coupled sugar symporter that actively transports myo-inositol and its stereoisomer scyllo-inositol across the plasma membrane, with a Na(+) to sugar coupling ratio of 2:1. Maintains myo-inositol concentration gradient that defines cell volume and fluid balance during osmotic stress, in particular in the fetoplacental unit and central nervous system. Forms coregulatory complexes with voltage-gated K(+) ion channels, allosterically altering ion selectivity, voltage dependence and gating kinetics of the channel. In turn, K(+) efflux through the channel forms a local electrical gradient that modulates electrogenic Na(+)-coupled myo-inositol influx through the transporter. Associates with KCNQ1-KCNE2 channel in the apical membrane of choroid plexus epithelium and regulates the myo-inositol gradient between blood and cerebrospinal fluid with an impact on neuron excitability. Associates with KCNQ2-KCNQ3 channel altering ion selectivity, increasing Na(+) and Cs(+) permeation relative to K(+) permeation. Provides myo-inositol precursor for biosynthesis of phosphoinositides such as PI(4,5)P2, thus indirectly affecting the activity of phosphoinositide-dependent ion channels and Ca(2+) signaling upon osmotic stress. The protein is Sodium/myo-inositol cotransporter of Homo sapiens (Human).